A 133-amino-acid chain; its full sequence is Small ribosomal subunit protein uS9 (133 aa).

Residues 94-133 (SADNRKPLKTEGHLSRDPRAKERRKYGLKKARKAPQFSKR) form a disordered region. Over residues 95–113 (ADNRKPLKTEGHLSRDPRA) the composition is skewed to basic and acidic residues. Basic residues predominate over residues 114–133 (KERRKYGLKKARKAPQFSKR).

The protein belongs to the universal ribosomal protein uS9 family.

The chain is Small ribosomal subunit protein uS9 from Synechococcus sp. (strain CC9605).